A 274-amino-acid chain; its full sequence is Malonyl-[acyl-carrier protein] O-methyltransferase (274 aa).

The protein belongs to the methyltransferase superfamily.

It catalyses the reaction malonyl-[ACP] + S-adenosyl-L-methionine = malonyl-[ACP] methyl ester + S-adenosyl-L-homocysteine. It participates in cofactor biosynthesis; biotin biosynthesis. In terms of biological role, converts the free carboxyl group of a malonyl-thioester to its methyl ester by transfer of a methyl group from S-adenosyl-L-methionine (SAM). It allows to synthesize pimeloyl-ACP via the fatty acid synthetic pathway. This Bacteroides helcogenes (strain ATCC 35417 / DSM 20613 / JCM 6297 / CCUG 15421 / P 36-108) protein is Malonyl-[acyl-carrier protein] O-methyltransferase.